The primary structure comprises 423 residues: MSQAFENAQQYIPGGVNSPVRAFKAVGGEPVFIKRAKGAYLYDINDKRYVDYVLSWGPMILGHADDDVLAAVTEKLQYGLSFGAPTEIETELAKKICNIMPGMDKVRFVSSGTEATMSAIRLARGYTGRDKIIKFEGCYHGHSDSLLIKAGSGALTFGVPSSPGVPACLAEHTVTLTYNNIEQVKQAFAEIGDQIACVIVEPVAGNMNCIPPIAGFLETLREECTKAGSLLILDEVMTGFRLGITGAQGYYGVQPDITTLGKVMGGGMPVGAFGGSKEVMDYIAPTGPVYQAGTLSGNPVAMAAGLATVQKLENPDFYAPLFAKTKTLCEGIQTLAKEAGIPLTGNYVGTMWGLFFTEEEKVTNYQQVMACDIPRFNKFFHGLLEEGVYIAPASYEAGFLSAAHTDADIDFTLQAAKNVFARI.

N6-(pyridoxal phosphate)lysine is present on lysine 262.

This sequence belongs to the class-III pyridoxal-phosphate-dependent aminotransferase family. HemL subfamily. In terms of assembly, homodimer. Pyridoxal 5'-phosphate serves as cofactor.

Its subcellular location is the cytoplasm. It catalyses the reaction (S)-4-amino-5-oxopentanoate = 5-aminolevulinate. It functions in the pathway porphyrin-containing compound metabolism; protoporphyrin-IX biosynthesis; 5-aminolevulinate from L-glutamyl-tRNA(Glu): step 2/2. This Saccharophagus degradans (strain 2-40 / ATCC 43961 / DSM 17024) protein is Glutamate-1-semialdehyde 2,1-aminomutase.